The following is a 248-amino-acid chain: Flavodoxin/ferredoxin--NADP reductase (248 aa).

One can recognise an FAD-binding FR-type domain in the interval Ala-2 to Asp-101. Residue Asp-17 coordinates NADP(+). Residues Arg-50 to Ser-53, Tyr-66, Lys-74 to Ser-76, and Thr-116 each bind FAD. Residues Ala-143 to Arg-144, Ser-173 to Arg-174, Arg-184, Asn-214 to Gln-216, and Asp-220 each bind NADP(+). Residue Tyr-247–Trp-248 coordinates FAD.

Belongs to the ferredoxin--NADP reductase type 1 family. In terms of assembly, monomer. Requires FAD as cofactor.

The protein resides in the cytoplasm. It catalyses the reaction 2 reduced [2Fe-2S]-[ferredoxin] + NADP(+) + H(+) = 2 oxidized [2Fe-2S]-[ferredoxin] + NADPH. It carries out the reaction reduced [flavodoxin] + NADP(+) = oxidized [flavodoxin] + NADPH + 2 H(+). Transports electrons between flavodoxin or ferredoxin and NADPH. Reduces flavodoxin 1, flavodoxin 2 and ferredoxin, ferredoxin being the kinetically and thermodynamically preferred partner. Required for the activation of several enzymes such as pyruvate formate-lyase, anaerobic ribonucleotide reductase and cobalamin-dependent methionine synthase. This chain is Flavodoxin/ferredoxin--NADP reductase, found in Escherichia coli (strain K12).